A 105-amino-acid polypeptide reads, in one-letter code: Small ribosomal subunit protein uS10 (105 aa).

This sequence belongs to the universal ribosomal protein uS10 family. In terms of assembly, part of the 30S ribosomal subunit.

Its function is as follows. Involved in the binding of tRNA to the ribosomes. The sequence is that of Small ribosomal subunit protein uS10 from Rickettsia peacockii (strain Rustic).